We begin with the raw amino-acid sequence, 302 residues long: Aquaporin NIP3-1 (302 aa).

The interval 1–31 is disordered; it reads MEPGSTPPNGSAPATPGTPAPLFSSGGPRVD. Over residues 7 to 21 the composition is skewed to low complexity; sequence PPNGSAPATPGTPAP. 2 helical membrane passes run 76–96 and 102–122; these read LGAE…APIV and GAIS…TVIL. An NPA 1 motif is present at residues 133–135; that stretch reads NPS. Transmembrane regions (helical) follow at residues 149–169, 193–213, and 217–237; these read LQVP…AFAL, AFFT…AVAT, and AVGE…ILVA. The short motif at 246–248 is the NPA 2 element; it reads NPV. A helical membrane pass occupies residues 264–284; the sequence is WIYLLAPTLGALAGASVYKAV.

It belongs to the MIP/aquaporin (TC 1.A.8) family. NIP (TC 1.A.8.12) subfamily.

The protein resides in the membrane. In terms of biological role, aquaporins facilitate the transport of water and small neutral solutes across cell membranes. This is Aquaporin NIP3-1 (NIP3-1) from Zea mays (Maize).